The primary structure comprises 570 residues: Repressible high-affinity phosphate permease (570 aa).

At 1–61 (MSTPQKTAGG…AVAGVGFFTD (61 aa)) the chain is on the cytoplasmic side. Residues 62-82 (SYDIFTVSLLTLMLGIVYFPG) traverse the membrane as a helical segment. The Extracellular portion of the chain corresponds to 83-95 (EGKMPTTSDTAIK). Residues 96–116 (LATSAGTVIGQVGFGAAADVF) traverse the membrane as a helical segment. At 117 to 120 (GRKS) the chain is on the cytoplasmic side. The chain crosses the membrane as a helical span at residues 121–141 (MYGLELLFIIFATLAQALASG). The Extracellular portion of the chain corresponds to 142-143 (SP). The helical transmembrane segment at 144–164 (SINIIGIIIFWRVLMGVGIGG) threads the bilayer. The Cytoplasmic portion of the chain corresponds to 165–186 (DYPLSSIITSEFATTKWRGAMM). The helical transmembrane segment at 187-207 (GAVFAMQGLGQLAAAFVMLFV) threads the bilayer. Residues 208 to 237 (TLGFKKSLEAAPTLASCTGDCAVAVDKMWR) are Extracellular-facing. A helical transmembrane segment spans residues 238–258 (TVIGVGAVPGCIALYYRLTIP). Over 259–325 (ETPRYTFDVK…FFRHYSKRKN (67 aa)) the chain is Cytoplasmic. A helical membrane pass occupies residues 326–346 (AMLLAGTALSWCFLDIAYYGV). At 347–374 (SLNNATILNVIGYSTTGAKNTYEILYNT) the chain is on the extracellular side. A helical membrane pass occupies residues 375 to 395 (AVGNLIIVLAGAVPGYWVTVF). At 396-403 (TVDTVGRK) the chain is on the cytoplasmic side. The helical transmembrane segment at 404-424 (PIQFMGFGILTILFVVMGFAY) threads the bilayer. The Extracellular segment spans residues 425–433 (KHLSPHALL). A helical membrane pass occupies residues 434–454 (AIFVLAQFFFNFGPNATTFIV). The Cytoplasmic portion of the chain corresponds to 455–468 (PGEVFPTRYRSTSH). The chain crosses the membrane as a helical span at residues 469-489 (GLSAAMGKIGSIIGQGAIAPL). At 490–505 (RTRGAVKGGNPNPWMN) the chain is on the extracellular side. The helical transmembrane segment at 506 to 526 (HVLEIYALFMLLGVGTTFLIP) threads the bilayer. The Cytoplasmic segment spans residues 527-570 (ETKRKTLEELSGEFDMSGEEEAQRDTTLTEHKTEAPTSSAAVNA). Residues 537 to 546 (SGEFDMSGEE) show a composition bias toward acidic residues. Residues 537–570 (SGEFDMSGEEEAQRDTTLTEHKTEAPTSSAAVNA) form a disordered region. Residues 547–560 (EAQRDTTLTEHKTE) show a composition bias toward basic and acidic residues. A compositionally biased stretch (polar residues) spans 561 to 570 (APTSSAAVNA).

This sequence belongs to the major facilitator superfamily. Sugar transporter (TC 2.A.1.1) family.

Its subcellular location is the cell membrane. Its activity is regulated as follows. Phosphate transport activity is competitively inhibited by arsenate. High-affinity transporter for external inorganic phosphate. Acts probably as a H(+)-phosphate symporter. In Neurospora crassa (strain ATCC 24698 / 74-OR23-1A / CBS 708.71 / DSM 1257 / FGSC 987), this protein is Repressible high-affinity phosphate permease.